The primary structure comprises 714 residues: Nucleolin (714 aa).

The segment at 1 to 303 is disordered; it reads MVKLAKAGKT…AKKQKVEGSE (303 aa). 3 positions are modified to N6-acetyllysine: Lys9, Lys15, and Lys16. A compositionally biased stretch (acidic residues) spans 24-42; that stretch reads VEEDSEDEEMSEEEDDSSG. 4 positions are modified to phosphoserine: Ser28, Ser34, Ser40, and Ser41. Residues 55-106 show a composition bias toward low complexity; it reads ATATPAKKVVVSQTKKVAVPTPAKKAAVTPGKKAAATPAKKAVTPAKAVATP. Repeat 1 spans residues 57–64; that stretch reads ATPAKKVV. Residues 57–134 form an 8 X 8 AA tandem repeats of X-T-P-X-K-K-X-X region; the sequence is ATPAKKVVVS…GAVTPAKGAK (78 aa). A Phosphoserine modification is found at Ser66. Phosphothreonine is present on residues Thr68, Thr75, Thr83, and Thr91. 3 tandem repeats follow at residues 74–81, 82–89, and 90–97. Lys95 is modified (N6-acetyllysine). The residue at position 98 (Thr98) is a Phosphothreonine. The 5; truncated repeat unit spans residues 98–103; the sequence is TPAKAV. At Lys101 the chain carries N6-acetyllysine. Residues 104-111 form repeat 6; that stretch reads ATPGKKGA. Thr105 bears the Phosphothreonine mark. At Lys108 the chain carries N6-acetyllysine. Phosphothreonine is present on Thr112. Lys115 is modified (N6-acetyllysine). 2 tandem repeats follow at residues 119–126 and 127–134. A Phosphothreonine modification is found at Thr120. An N6-acetyllysine modification is found at Lys123. Phosphoserine occurs at positions 144 and 157. Acidic residues predominate over residues 144–170; the sequence is SDEDEDDDDDEDDSDEDEEDEEEDEFE. Positions 171 to 187 are enriched in low complexity; the sequence is PPVVKGKQGKVAAAAPA. Ser188 carries the phosphoserine modification. Residues 188 to 216 are compositionally biased toward acidic residues; that stretch reads SEDEDEEEDEEEEEEDEEEEDDSEEEEAM. Thr219 is modified (phosphothreonine). Over residues 240 to 272 the composition is skewed to acidic residues; that stretch reads EEDDDDEEEDEDEEEDEEEEEDEEEEEEEEEEE. The span at 285 to 301 shows a compositional bias: basic and acidic residues; sequence MTKQKEVPEAKKQKVEG. Residue Lys298 forms a Glycyl lysine isopeptide (Lys-Gly) (interchain with G-Cter in SUMO1); alternate linkage. Lys298 is covalently cross-linked (Glycyl lysine isopeptide (Lys-Gly) (interchain with G-Cter in SUMO2); alternate). Position 302 is a phosphoserine (Ser302). RRM domains lie at 308-384 and 394-467; these read FNLF…KPKG and RTLL…YTGE. Position 319 is an N6-acetyllysine (Lys319). Lys325 participates in a covalent cross-link: Glycyl lysine isopeptide (Lys-Gly) (interchain with G-Cter in SUMO1); alternate. Residue Lys325 forms a Glycyl lysine isopeptide (Lys-Gly) (interchain with G-Cter in SUMO2); alternate linkage. Lys349 carries the N6-acetyllysine modification. The residue at position 357 (Ser357) is a Phosphoserine. A Phosphothreonine modification is found at Thr368. Lys371 participates in a covalent cross-link: Glycyl lysine isopeptide (Lys-Gly) (interchain with G-Cter in SUMO2). Lys378 participates in a covalent cross-link: Glycyl lysine isopeptide (Lys-Gly) (interchain with G-Cter in SUMO2); alternate. At Lys378 the chain carries N6-acetyllysine; alternate. An N6-acetyllysine modification is found at Lys399. Phosphoserine is present on Ser402. Thr406 is modified (phosphothreonine). N6-acetyllysine occurs at positions 428 and 445. 2 positions are modified to phosphoserine: Ser459 and Ser461. N6-acetyllysine is present on residues Lys468 and Lys477. The RRM 3 domain maps to 486-560; the sequence is KTLVLSNLSY…RTIRLELQGP (75 aa). Lys513 is covalently cross-linked (Glycyl lysine isopeptide (Lys-Gly) (interchain with G-Cter in SUMO2); alternate). At Lys513 the chain carries N6-acetyllysine; alternate. Position 521 is an N6-acetyllysine (Lys521). At Ser563 the chain carries Phosphoserine. Residue Lys572 is modified to N6-acetyllysine. The 76-residue stretch at 572-647 folds into the RRM 4 domain; sequence KTLFVKGLSE…NKVTLDWAKP (76 aa). Residue Lys577 forms a Glycyl lysine isopeptide (Lys-Gly) (interchain with G-Cter in SUMO2); alternate linkage. At Lys577 the chain carries N6-acetyllysine; alternate. A Phosphoserine modification is found at Ser580. Lys589 is covalently cross-linked (Glycyl lysine isopeptide (Lys-Gly) (interchain with G-Cter in SUMO1); alternate). Lys589 is covalently cross-linked (Glycyl lysine isopeptide (Lys-Gly) (interchain with G-Cter in SUMO2); alternate). Phosphoserine occurs at positions 591 and 619. Lys624 is covalently cross-linked (Glycyl lysine isopeptide (Lys-Gly) (interchain with G-Cter in SUMO2)). The tract at residues 642–714 is disordered; it reads LDWAKPKGEG…KPQGKKTKFE (73 aa). Lys646 bears the N6-acetyllysine mark. Residues 650 to 703 show a composition bias toward gly residues; sequence EGGFGGRGGGRGGFGGRGGGRGGGRGGFGGRGRGGFGGRGGFRGGRGGGGGGGD. Asymmetric dimethylarginine occurs at positions 656, 660, 666, 670, 674, 680, 682, 688, and 692. Arg695 bears the Asymmetric dimethylarginine; alternate mark. An Omega-N-methylarginine; alternate modification is found at Arg695.

Identified in a IGF2BP1-dependent mRNP granule complex containing untranslated mRNAs. Component of the SWAP complex that consists of NPM1, NCL/nucleolin, PARP1 and SWAP70. Component of a complex which is at least composed of HTATSF1/Tat-SF1, the P-TEFb complex components CDK9 and CCNT1, RNA polymerase II, SUPT5H, and NCL/nucleolin. Interacts with AICDA. Interacts with APTX. Interacts with C1QBP. Interacts with ERBB4. Interacts (via C-terminus) with FMR1 isoform 6 (via N-terminus). Interacts with GZF1; this interaction is important for nucleolar localization of GZF1. Interacts with NSUN2. Interacts with NVL. Interacts (via N-terminus domain) with SETX. Interacts (via RRM1 and C-terminal RRM4/Arg/Gly-rich domains) with TERT; the interaction is important for nucleolar localization of TERT. Interacts with WDR46. Interacts with ZFP36. Interacts with LRRC34. Interacts with RRP1B. Interacts with HNRNPU; this interaction occurs during mitosis. Interacts with RIOK1; RIOK1 recruits NCL to PRMT5 for symmetrically methylation. Interacts with ZBTB7B. Interacts with MDK; this interaction promotes NCL clustering and lateral movements of this complex into lipid rafts leading to MDK internalization. Interacts with HDGF. Interacts with ALKBH2. Interacts with IGFBP5; this interaction is necessary for IGFBP5 localization to the nucleus. Interacts with DDX24 (when ubiquitinated); this interaction may be important during ribosome biogenesis. In terms of processing, some glutamate residues are glycylated by TTLL8. This modification occurs exclusively on glutamate residues and results in a glycine chain on the gamma-carboxyl group. Post-translationally, symmetrically methylated by PRMT5.

Its subcellular location is the nucleus. It is found in the nucleolus. The protein localises to the cytoplasm. Functionally, nucleolin is the major nucleolar protein of growing eukaryotic cells. It is found associated with intranucleolar chromatin and pre-ribosomal particles. It induces chromatin decondensation by binding to histone H1. It is thought to play a role in pre-rRNA transcription and ribosome assembly. May play a role in the process of transcriptional elongation. Binds RNA oligonucleotides with 5'-UUAGGG-3' repeats more tightly than the telomeric single-stranded DNA 5'-TTAGGG-3' repeats. The polypeptide is Nucleolin (NCL) (Mesocricetus auratus (Golden hamster)).